We begin with the raw amino-acid sequence, 206 residues long: Glycerol-3-phosphate acyltransferase 1 (206 aa).

The next 5 helical transmembrane spans lie at 7 to 27 (LVIG…KIFL), 54 to 74 (ILTC…VYFI), 81 to 101 (DLSF…WNHF), 114 to 134 (IVFF…FLVI), and 155 to 175 (WINF…IMIF).

The protein belongs to the PlsY family. Probably interacts with PlsX.

The protein resides in the cell membrane. It carries out the reaction an acyl phosphate + sn-glycerol 3-phosphate = a 1-acyl-sn-glycero-3-phosphate + phosphate. It functions in the pathway lipid metabolism; phospholipid metabolism. In terms of biological role, catalyzes the transfer of an acyl group from acyl-phosphate (acyl-PO(4)) to glycerol-3-phosphate (G3P) to form lysophosphatidic acid (LPA). This enzyme utilizes acyl-phosphate as fatty acyl donor, but not acyl-CoA or acyl-ACP. The sequence is that of Glycerol-3-phosphate acyltransferase 1 from Lactobacillus johnsonii (strain CNCM I-12250 / La1 / NCC 533).